A 359-amino-acid polypeptide reads, in one-letter code: Serine hydrolase-like protein DDB_G0286239 (359 aa).

The AB hydrolase-1 domain occupies 38–289 (LALHGWLDNA…VPGSHHFHME (252 aa)). Serine 111 is a catalytic residue. A disordered region spans residues 310–359 (FTPSSTTQQQQQQQQSAENKKGDNHNQIAEQDLSTSNTSSPIISKPKPNL). Polar residues predominate over residues 334–351 (HNQIAEQDLSTSNTSSPI).

This sequence belongs to the AB hydrolase superfamily.

Functionally, probable serine hydrolase. This chain is Serine hydrolase-like protein DDB_G0286239, found in Dictyostelium discoideum (Social amoeba).